The primary structure comprises 92 residues: MNRLQQRQLFLENLLVGVNSTFHQMQKLSINTCCQNLQKILDLLILHRTIHSPAFRLDRMQLRQMQMLACLWIHQRNHDHLATLDTIKWISP.

Belongs to the rotavirus A NSP6 family. Interacts with NSP2 and NSP5.

Its subcellular location is the host cytoplasm. The protein localises to the host mitochondrion. The protein is Non-structural protein 6 of Homo sapiens (Human).